Here is a 506-residue protein sequence, read N- to C-terminus: Methylthioalkylmalate synthase 2, chloroplastic (506 aa).

Residues 1–49 (MASSLLTSSGMIPTTGSTVVGRSVLPFQSSLHSLRLTHSYKNPALFISC) constitute a chloroplast transit peptide. Residues 85–359 (VRVFDTTLRD…YTRIDTRQIM (275 aa)) enclose the Pyruvate carboxyltransferase domain.

This sequence belongs to the alpha-IPM synthase/homocitrate synthase family.

It is found in the plastid. Its subcellular location is the chloroplast. The enzyme catalyses an omega-(methylsulfanyl)-2-oxoalkanoate + acetyl-CoA + H2O = a 2-(omega-methylsulfanyl)alkylmalate + CoA + H(+). Its function is as follows. Catalyzes only the first methionine chain elongation cycle. This chain is Methylthioalkylmalate synthase 2, chloroplastic (MAM2), found in Arabidopsis thaliana (Mouse-ear cress).